The sequence spans 139 residues: D-ribose pyranase (139 aa).

The active-site Proton donor is H20. Residues D28, H106, and 128–130 (YAN) each bind substrate.

The protein belongs to the RbsD / FucU family. RbsD subfamily. Homodecamer.

It localises to the cytoplasm. The enzyme catalyses beta-D-ribopyranose = beta-D-ribofuranose. The protein operates within carbohydrate metabolism; D-ribose degradation; D-ribose 5-phosphate from beta-D-ribopyranose: step 1/2. Catalyzes the interconversion of beta-pyran and beta-furan forms of D-ribose. This Haemophilus influenzae (strain PittGG) protein is D-ribose pyranase.